The primary structure comprises 470 residues: Nucleoporin NUP49 (470 aa).

The span at 1-13 (MSLFGTNTTSQTP) shows a compositional bias: polar residues. A disordered region spans residues 1–92 (MSLFGTNTTS…STTTTTSQPQ (92 aa)). GLFG repeat units lie at residues 17–20 (GLFG), 45–48 (GLFG), 63–66 (GLFG), 79–82 (GLFG), 96–99 (GLFG), 111–114 (GLFG), 127–130 (GLFG), 142–145 (GLFG), 156–159 (GLFG), 168–171 (GLFG), 181–184 (GLFG), and 193–197 (GLFGQ). Low complexity predominate over residues 20–31 (GTTTSQSAQTGS). The span at 32–74 (LFGTATSQPQQTGGLFGSTATQTPSSQLQSTGLFGSTTATSQP) shows a compositional bias: polar residues. The segment covering 75–92 (QQTGGLFGSTTTTTSQPQ) has biased composition (low complexity). The interval 196–221 (GQSTTQPQQQQNATPGLTMGQSTNTQ) is disordered. Over residues 197-206 (QSTTQPQQQQ) the composition is skewed to low complexity. A compositionally biased stretch (polar residues) spans 207 to 221 (NATPGLTMGQSTNTQ). 2 coiled-coil regions span residues 239–270 (TRFNDLTEALQQEIAKIDEEIQKCIRDKEAVD) and 375–401 (FSKTADEMEEMMKKFEKTITEIEAHLT).

The protein belongs to the nucleoporin GLFG family. In terms of assembly, component of the nuclear pore complex (NPC). NPC constitutes the exclusive means of nucleocytoplasmic transport. NPCs allow the passive diffusion of ions and small molecules and the active, nuclear transport receptor-mediated bidirectional transport of macromolecules such as proteins, RNAs, ribonucleoparticles (RNPs), and ribosomal subunits across the nuclear envelope. Due to its 8-fold rotational symmetry, all subunits are present with 8 copies or multiples thereof.

The protein localises to the nucleus. Its subcellular location is the nuclear pore complex. It is found in the nucleus membrane. In terms of biological role, functions as a component of the nuclear pore complex (NPC). NPC components, collectively referred to as nucleoporins (NUPs), can play the role of both NPC structural components and of docking or interaction partners for transiently associated nuclear transport factors. Active directional transport is assured by both, a Phe-Gly (FG) repeat affinity gradient for these transport factors across the NPC and a transport cofactor concentration gradient across the nuclear envelope (GSP1 and GSP2 GTPases associated predominantly with GTP in the nucleus, with GDP in the cytoplasm). NUP49 plays an important role in several nuclear transport pathways including poly(A)+ RNA, tRNA, and pre-ribosome transport. The chain is Nucleoporin NUP49 (NUP49) from Chaetomium thermophilum (strain DSM 1495 / CBS 144.50 / IMI 039719) (Thermochaetoides thermophila).